The sequence spans 475 residues: Ribulose bisphosphate carboxylase large chain (475 aa).

Residues 1–2 (MS) constitute a propeptide that is removed on maturation. Pro3 bears the N-acetylproline mark. Lys14 is modified (N6,N6,N6-trimethyllysine). Positions 123 and 173 each coordinate substrate. Lys175 (proton acceptor) is an active-site residue. Lys177 is a substrate binding site. Positions 201, 203, and 204 each coordinate Mg(2+). Residue Lys201 is modified to N6-carboxylysine. His294 acts as the Proton acceptor in catalysis. Residues Arg295, His327, and Ser379 each coordinate substrate.

It belongs to the RuBisCO large chain family. Type I subfamily. As to quaternary structure, heterohexadecamer of 8 large chains and 8 small chains; disulfide-linked. The disulfide link is formed within the large subunit homodimers. It depends on Mg(2+) as a cofactor. Post-translationally, the disulfide bond which can form in the large chain dimeric partners within the hexadecamer appears to be associated with oxidative stress and protein turnover.

Its subcellular location is the plastid. It is found in the chloroplast. The catalysed reaction is 2 (2R)-3-phosphoglycerate + 2 H(+) = D-ribulose 1,5-bisphosphate + CO2 + H2O. It carries out the reaction D-ribulose 1,5-bisphosphate + O2 = 2-phosphoglycolate + (2R)-3-phosphoglycerate + 2 H(+). Functionally, ruBisCO catalyzes two reactions: the carboxylation of D-ribulose 1,5-bisphosphate, the primary event in carbon dioxide fixation, as well as the oxidative fragmentation of the pentose substrate in the photorespiration process. Both reactions occur simultaneously and in competition at the same active site. The chain is Ribulose bisphosphate carboxylase large chain from Viscum album (European mistletoe).